Consider the following 383-residue polypeptide: Succinyl-diaminopimelate desuccinylase (383 aa).

Zn(2+) is bound at residue H69. The active site involves D71. Position 103 (D103) interacts with Zn(2+). Residue E137 is the Proton acceptor of the active site. Residues E138, E166, and H357 each coordinate Zn(2+).

Belongs to the peptidase M20A family. DapE subfamily. As to quaternary structure, homodimer. The cofactor is Zn(2+). It depends on Co(2+) as a cofactor.

It carries out the reaction N-succinyl-(2S,6S)-2,6-diaminopimelate + H2O = (2S,6S)-2,6-diaminopimelate + succinate. The protein operates within amino-acid biosynthesis; L-lysine biosynthesis via DAP pathway; LL-2,6-diaminopimelate from (S)-tetrahydrodipicolinate (succinylase route): step 3/3. Catalyzes the hydrolysis of N-succinyl-L,L-diaminopimelic acid (SDAP), forming succinate and LL-2,6-diaminopimelate (DAP), an intermediate involved in the bacterial biosynthesis of lysine and meso-diaminopimelic acid, an essential component of bacterial cell walls. The protein is Succinyl-diaminopimelate desuccinylase of Rickettsia typhi (strain ATCC VR-144 / Wilmington).